A 215-amino-acid polypeptide reads, in one-letter code: Outer-membrane lipoprotein carrier protein (215 aa).

Positions 1-24 (MFVLKARHLMAAGLVSLAAWSAGA) are cleaved as a signal peptide.

Belongs to the LolA family. Monomer.

The protein localises to the periplasm. In terms of biological role, participates in the translocation of lipoproteins from the inner membrane to the outer membrane. Only forms a complex with a lipoprotein if the residue after the N-terminal Cys is not an aspartate (The Asp acts as a targeting signal to indicate that the lipoprotein should stay in the inner membrane). This chain is Outer-membrane lipoprotein carrier protein, found in Ralstonia nicotianae (strain ATCC BAA-1114 / GMI1000) (Ralstonia solanacearum).